Consider the following 327-residue polypeptide: Zinc finger C2HC domain-containing protein 1A (327 aa).

Residues 13–42 (ELVPCKICGRSFFPKVLKKHVPICQKTAAK) form a C2HC/C3H-type 1 zinc finger. Positions 17, 20, 32, and 36 each coordinate Zn(2+). 2 disordered regions span residues 40–96 (AAKR…KHEE) and 108–131 (NQVI…DYIQ). A compositionally biased stretch (basic and acidic residues) spans 46–56 (VFDSGRQRAEG). Positions 63–76 (KPIKPKLQSSSSSS) are enriched in low complexity. Residues 116–125 (PLPPPPPPSY) show a composition bias toward pro residues. The segment at 128-157 (DYIQCPYCQRRFGENAADRHIKFCKEQASR) adopts a C2HC/C3H-type 2 zinc-finger fold. Zn(2+)-binding residues include Cys-132, Cys-135, His-147, and Cys-151. Residues 154–271 (QASRISNKSK…NPSTGIGMNK (118 aa)) form a disordered region. Residues 187 to 199 (NSPTASSVSSRLP) are compositionally biased toward polar residues. The span at 211–229 (GIPSSKPSSTGSIKSTPSG) shows a compositional bias: low complexity. 2 stretches are compositionally biased toward polar residues: residues 233-245 (LRNN…SPPS) and 255-267 (VSQS…STGI).

This sequence belongs to the ZC2HC1 family. Zn(2+) is required as a cofactor.

The polypeptide is Zinc finger C2HC domain-containing protein 1A (zc2hc1a) (Danio rerio (Zebrafish)).